The chain runs to 253 residues: Major prion protein (253 aa).

The N-terminal stretch at 1 to 22 (MANLGCWMLVLFVATWSDLGLC) is a signal peptide. The interaction with GRB2, ERI3 and SYN1 stretch occupies residues 23-230 (KKRPKPGGWN…ESQAYYQRGS (208 aa)). The tract at residues 26–108 (PKPGGWNTGG…WNKPSKPKTS (83 aa)) is disordered. 5 consecutive repeat copies span residues 51 to 59 (PQGGGGWGQ), 60 to 67 (PHGGGWGQ), 68 to 75 (PHGGGWGQ), 76 to 83 (PHGGGWGQ), and 84 to 91 (PHGGGWGQ). Residues 51 to 91 (PQGGGGWGQPHGGGWGQPHGGGWGQPHGGGWGQPHGGGWGQ) are 5 X 8 AA tandem repeats of P-H-G-G-G-W-G-Q. The segment covering 52-95 (QGGGGWGQPHGGGWGQPHGGGWGQPHGGGWGQPHGGGWGQGGGT) has biased composition (gly residues). Cu(2+) contacts are provided by H61, G62, G63, H69, G70, G71, H77, G78, G79, H85, G86, and G87. Cysteines 179 and 214 form a disulfide. N-linked (GlcNAc...) asparagine glycans are attached at residues N181 and N197. The GPI-anchor amidated serine moiety is linked to residue S230. Residues 231 to 253 (SMVFFSSPPVILLISFLIFLIVG) constitute a propeptide, removed in mature form.

This sequence belongs to the prion family. Monomer and homodimer. Has a tendency to aggregate into amyloid fibrils containing a cross-beta spine, formed by a steric zipper of superposed beta-strands. Soluble oligomers may represent an intermediate stage on the path to fibril formation. Copper binding may promote oligomerization. Interacts with GRB2, APP, ERI3/PRNPIP and SYN1. Mislocalized cytosolically exposed PrP interacts with MGRN1; this interaction alters MGRN1 subcellular location and causes lysosomal enlargement. Interacts with KIAA1191.

Its subcellular location is the cell membrane. It is found in the golgi apparatus. Its primary physiological function is unclear. Has cytoprotective activity against internal or environmental stresses. May play a role in neuronal development and synaptic plasticity. May be required for neuronal myelin sheath maintenance. May play a role in iron uptake and iron homeostasis. Soluble oligomers are toxic to cultured neuroblastoma cells and induce apoptosis (in vitro). Association with GPC1 (via its heparan sulfate chains) targets PRNP to lipid rafts. Also provides Cu(2+) or Zn(2+) for the ascorbate-mediated GPC1 deaminase degradation of its heparan sulfate side chains. In Trachypithecus francoisi (Francois' leaf monkey), this protein is Major prion protein (PRNP).